Consider the following 247-residue polypeptide: ATP synthase subunit a, chloroplastic (247 aa).

Transmembrane regions (helical) follow at residues 38–58 (QVLI…TIAV), 95–115 (VPFI…GALF), 134–154 (INTT…AGLT), 199–219 (LVVV…VMFL), and 220–240 (GLFT…AYIG).

This sequence belongs to the ATPase A chain family. As to quaternary structure, F-type ATPases have 2 components, CF(1) - the catalytic core - and CF(0) - the membrane proton channel. CF(1) has five subunits: alpha(3), beta(3), gamma(1), delta(1), epsilon(1). CF(0) has four main subunits: a, b, b' and c.

The protein resides in the plastid. The protein localises to the chloroplast thylakoid membrane. Functionally, key component of the proton channel; it plays a direct role in the translocation of protons across the membrane. This is ATP synthase subunit a, chloroplastic from Piper cenocladum (Ant piper).